The following is a 284-amino-acid chain: Tropomyosin alpha-1 chain (284 aa).

The disordered stretch occupies residues 1 to 37 (MDAIKKKMQMLKLDKENALDRAEQAETDKKAAEERSK). Residues 1–284 (MDAIKKKMQM…DHALNDMTSI (284 aa)) are a coiled coil. A compositionally biased stretch (basic and acidic residues) spans 12 to 37 (KLDKENALDRAEQAETDKKAAEERSK).

This sequence belongs to the tropomyosin family. In terms of assembly, homodimer. Heterodimer of an alpha (TPM1, TPM3 or TPM4) and a beta (TPM2) chain.

The protein localises to the cytoplasm. It is found in the cytoskeleton. Functionally, binds to actin filaments in muscle and non-muscle cells. Plays a central role, in association with the troponin complex, in the calcium dependent regulation of vertebrate striated muscle contraction. Smooth muscle contraction is regulated by interaction with caldesmon. In non-muscle cells is implicated in stabilizing cytoskeleton actin filaments. The polypeptide is Tropomyosin alpha-1 chain (tpma) (Danio rerio (Zebrafish)).